A 164-amino-acid chain; its full sequence is Large ribosomal subunit protein bL9 (164 aa).

The protein belongs to the bacterial ribosomal protein bL9 family.

Its function is as follows. Binds to the 23S rRNA. The polypeptide is Large ribosomal subunit protein bL9 (Psychrobacter sp. (strain PRwf-1)).